Reading from the N-terminus, the 212-residue chain is Large ribosomal subunit protein uL3 (212 aa).

The residue at position 153 (glutamine 153) is an N5-methylglutamine.

This sequence belongs to the universal ribosomal protein uL3 family. As to quaternary structure, part of the 50S ribosomal subunit. Forms a cluster with proteins L14 and L19. Methylated by PrmB.

In terms of biological role, one of the primary rRNA binding proteins, it binds directly near the 3'-end of the 23S rRNA, where it nucleates assembly of the 50S subunit. The sequence is that of Large ribosomal subunit protein uL3 from Shewanella piezotolerans (strain WP3 / JCM 13877).